A 174-amino-acid chain; its full sequence is ATP-dependent protease subunit HslV (174 aa).

Thr4 is an active-site residue. Positions 159, 162, and 165 each coordinate Na(+).

Belongs to the peptidase T1B family. HslV subfamily. A double ring-shaped homohexamer of HslV is capped on each side by a ring-shaped HslU homohexamer. The assembly of the HslU/HslV complex is dependent on binding of ATP.

Its subcellular location is the cytoplasm. It carries out the reaction ATP-dependent cleavage of peptide bonds with broad specificity.. With respect to regulation, allosterically activated by HslU binding. Its function is as follows. Protease subunit of a proteasome-like degradation complex believed to be a general protein degrading machinery. The protein is ATP-dependent protease subunit HslV of Moorella thermoacetica (strain ATCC 39073 / JCM 9320).